The chain runs to 209 residues: MTRHSLPPIQGLYAITPDETDTSRLVTISEAVLAGGAGALQYRNKRVSGTQASNQAGALLDLCRRFQTPLIINDDVQLAAALDADGVHLGIDDGDIAAARAALGPDKIIGASCYNNLALARQAASLGADYVAFGACFPSSTKPDAPRADIALFAKARELGLPIVAIGGITLDNAAGIISAGADAVAVIGALWTAADIEARARQFHQLFN.

Residues 41 to 45 (QYRNK) and Asn-73 each bind 4-amino-2-methyl-5-(diphosphooxymethyl)pyrimidine. Asp-74 and Asp-93 together coordinate Mg(2+). 4-amino-2-methyl-5-(diphosphooxymethyl)pyrimidine is bound at residue Ser-112. 139–141 (SST) provides a ligand contact to 2-[(2R,5Z)-2-carboxy-4-methylthiazol-5(2H)-ylidene]ethyl phosphate. Lys-142 serves as a coordination point for 4-amino-2-methyl-5-(diphosphooxymethyl)pyrimidine. Gly-168 provides a ligand contact to 2-[(2R,5Z)-2-carboxy-4-methylthiazol-5(2H)-ylidene]ethyl phosphate.

It belongs to the thiamine-phosphate synthase family. Mg(2+) serves as cofactor.

The catalysed reaction is 2-[(2R,5Z)-2-carboxy-4-methylthiazol-5(2H)-ylidene]ethyl phosphate + 4-amino-2-methyl-5-(diphosphooxymethyl)pyrimidine + 2 H(+) = thiamine phosphate + CO2 + diphosphate. It catalyses the reaction 2-(2-carboxy-4-methylthiazol-5-yl)ethyl phosphate + 4-amino-2-methyl-5-(diphosphooxymethyl)pyrimidine + 2 H(+) = thiamine phosphate + CO2 + diphosphate. It carries out the reaction 4-methyl-5-(2-phosphooxyethyl)-thiazole + 4-amino-2-methyl-5-(diphosphooxymethyl)pyrimidine + H(+) = thiamine phosphate + diphosphate. It functions in the pathway cofactor biosynthesis; thiamine diphosphate biosynthesis; thiamine phosphate from 4-amino-2-methyl-5-diphosphomethylpyrimidine and 4-methyl-5-(2-phosphoethyl)-thiazole: step 1/1. Condenses 4-methyl-5-(beta-hydroxyethyl)thiazole monophosphate (THZ-P) and 2-methyl-4-amino-5-hydroxymethyl pyrimidine pyrophosphate (HMP-PP) to form thiamine monophosphate (TMP). This is Thiamine-phosphate synthase from Methylobacillus flagellatus (strain ATCC 51484 / DSM 6875 / VKM B-1610 / KT).